Reading from the N-terminus, the 278-residue chain is Bis(5'-nucleosyl)-tetraphosphatase, symmetrical (278 aa).

Belongs to the Ap4A hydrolase family.

It carries out the reaction P(1),P(4)-bis(5'-adenosyl) tetraphosphate + H2O = 2 ADP + 2 H(+). Hydrolyzes diadenosine 5',5'''-P1,P4-tetraphosphate to yield ADP. The sequence is that of Bis(5'-nucleosyl)-tetraphosphatase, symmetrical from Methylococcus capsulatus (strain ATCC 33009 / NCIMB 11132 / Bath).